The sequence spans 775 residues: MRPIKKSRSLKLPKSILEEIGESDSSARRGKRNHNLPHREKRKFARISRGKNGYENRKITEEGDSKSSELNDDYLDAHRKSSTKKKSSQNKQAKESKLLDPIAFQHKIALEEDDREIAHLEKMLGIKSKDKSAHSKIDKEFGWLLEDLDQEIDDIGVPGTEDPSYGHSEDSEVSDDTGDHGSVDELESEREGNSGEEEEEFHGFESNSDEFHQPETKPIRMDPLKPAVPSLPNANVGSKYVPPSLRKKLGGDKESEDALRLRRKLQGSLNKLSIANISSIIKEIEVLYMENSRHSVTSTITNLLLQTVMGRESMLDQLAIVYAALATALYRIVGNDFGAHLLQTLVERFLQLYKSKEKEPLSSHKETSNLIVFFVELYNFQLVSCVLVYDLIRLFLRSLTELNVEMLLKIVLNCGGQLRSDDPTSLQDIVTEMNLLLASADPSTISVRTKFMVESITNLKENKKTKVANASAQSKFEAVNQLKKFLGSLGNRSLNAREPLRVTLEDIEQIETKGRWWLVGASWNNVPSGDNTLSTEALQDKKKSEELTAHSKILQAAKKLRLNSTLRTSIFVALVGSEDYIDAWERVLKLHLKRNQLPEIAYVILHCVGNEKLYNPFYGLVALKCCTLQHNLKKSFQFSLWDFFNELQPDDDSEEREISMRRIVNLAKLYASLVIEAAQPLTILKHVDFMAINAQMQTFLLVFFTDIILGVKDDLQLVKIFENCKAEKNLSSKVDWFLKTYVRKNPLVDNSKKALFKSNLAMASAILQSISKEEI.

Basic residues-rich tracts occupy residues 1 to 11 (MRPIKKSRSLK) and 28 to 49 (RRGK…RISR). 2 disordered regions span residues 1–101 (MRPI…LLDP) and 152–253 (IDDI…GGDK). Composition is skewed to basic and acidic residues over residues 52 to 79 (NGYE…DAHR), 177 to 193 (TGDH…REGN), and 209 to 223 (DEFH…RMDP). Residues 262 to 463 (RRKLQGSLNK…ESITNLKENK (202 aa)) form the MIF4G domain. The 125-residue stretch at 565–689 (TLRTSIFVAL…PLTILKHVDF (125 aa)) folds into the MI domain.

It belongs to the CWC22 family.

The protein localises to the nucleus. It localises to the nucleolus. Functionally, involved in osmoregulatory glycerol response. In Schizosaccharomyces pombe (strain 972 / ATCC 24843) (Fission yeast), this protein is Suppressor of glycerol defect protein 1 (sgd1).